The following is a 272-amino-acid chain: Biglycan (272 aa).

The first 16 residues, methionine 1–alanine 16, serve as a signal peptide directing secretion. Residues leucine 17–asparagine 37 constitute a propeptide that is removed on maturation. O-linked (Xyl...) (glycosaminoglycan) serine glycans are attached at residues serine 42 and serine 48. The LRRNT domain occupies alanine 55–proline 91. Cystine bridges form between cysteine 64-cysteine 70 and cysteine 68-cysteine 77. LRR repeat units follow at residues aspartate 92–glycine 113, histidine 116–proline 137, aspartate 138–glutamate 161, threonine 162–arginine 183, lysine 186–proline 209, threonine 210–lysine 232, leucine 233–proline 254, and valine 255–asparagine 272.

The protein belongs to the small leucine-rich proteoglycan (SLRP) family. SLRP class I subfamily. As to quaternary structure, homodimer. Forms a ternary complex with MFAP2 and ELN. The two attached glycosaminoglycan chains can be either chondroitin sulfate or dermatan sulfate. In terms of tissue distribution, found in several connective tissues, especially in articular cartilages.

It is found in the secreted. The protein localises to the extracellular space. The protein resides in the extracellular matrix. Functionally, may be involved in collagen fiber assembly. The protein is Biglycan (BGN) of Sus scrofa (Pig).